A 280-amino-acid polypeptide reads, in one-letter code: Acetyl-coenzyme A carboxylase carboxyl transferase subunit beta (280 aa).

The CoA carboxyltransferase N-terminal domain maps to 28–280 (LFLACPYCGA…IVRLHTAEAE (253 aa)). Cys-32, Cys-35, Cys-50, and Cys-53 together coordinate Zn(2+). The segment at 32–53 (CPYCGAQMYNKQLGKYRVCAKC) adopts a C4-type zinc-finger fold.

This sequence belongs to the AccD/PCCB family. In terms of assembly, acetyl-CoA carboxylase is a heterohexamer composed of biotin carboxyl carrier protein (AccB), biotin carboxylase (AccC) and two subunits each of ACCase subunit alpha (AccA) and ACCase subunit beta (AccD). Zn(2+) is required as a cofactor.

It localises to the cytoplasm. It carries out the reaction N(6)-carboxybiotinyl-L-lysyl-[protein] + acetyl-CoA = N(6)-biotinyl-L-lysyl-[protein] + malonyl-CoA. Its pathway is lipid metabolism; malonyl-CoA biosynthesis; malonyl-CoA from acetyl-CoA: step 1/1. Component of the acetyl coenzyme A carboxylase (ACC) complex. Biotin carboxylase (BC) catalyzes the carboxylation of biotin on its carrier protein (BCCP) and then the CO(2) group is transferred by the transcarboxylase to acetyl-CoA to form malonyl-CoA. This chain is Acetyl-coenzyme A carboxylase carboxyl transferase subunit beta, found in Leuconostoc mesenteroides subsp. mesenteroides (strain ATCC 8293 / DSM 20343 / BCRC 11652 / CCM 1803 / JCM 6124 / NCDO 523 / NBRC 100496 / NCIMB 8023 / NCTC 12954 / NRRL B-1118 / 37Y).